A 772-amino-acid polypeptide reads, in one-letter code: MLARPSTTVLARRPFFRFRGCLNEPRPTKARCLATAATHHQIPSTVDDKALVDLFDQPSLSKVRSHFHSTGLFGHPSLTHPRSLVSLAESTLVRAQLLTQRILDAKESEDELAHVVKNLDRLSDMLCGVIDLAELVRNAHPDRLWVEAGNHAYETLCEFMNVLNTHTGLNDTLKTVLSNPTLVKSLDPEAYQTALIFSRDFEKSGIDLPPATRNKFVSLSSDILILGRQFLENASTPRPPTSVKASELAGLKDKGMGVRLQLQAQFTNRDLQVYPGSLQAQMIMRAAPNEEPRRKLYLAANSSTPEQIHVLETLLKKRAELAQLVGRDSFAHMTLDDKMAKKPEHVTNFLDALIDHTRPFARNALRTLAQRKQAHHNLPALPVIQAWDRDFYCPPDPPAPPIPLPPLTIGTVFMGLSRLFRHLYGVSLRPAQAASGEVWHPDVQKLEVVDEQQGIIGWIYADLFPRRGKASGAAHYTVRCSRRTDDDDEANDGMFEGTELQIQESQQFEAVKRHRLPNQEGVYQLPLVVLLTEFARPSLSKGAAVLEWHEVQTLFHEMGHAMHSMLGRTEYQNVSGTRCATDFVELPSILMEHFLNSPAVLSLFDADNTTSLRQIGNHHNDPCHAIDTYSQIMLAVVDQVYHSPSVLNSSFDSTNEFANLVNKRGLIPYVPGTSFQTQFGHLFGYGATYYSYLFDRAIASRVWSKVFSRDPLNRELGEQYKQEVLRWGGARDPWEMVSTLLDQPELAAGDAEAMREVGRWRIEDEVGNSGRH.

The N-terminal 33 residues, 1–33 (MLARPSTTVLARRPFFRFRGCLNEPRPTKARCL), are a transit peptide targeting the mitochondrion. A Zn(2+)-binding site is contributed by His556. Glu557 is a catalytic residue. His560 and His563 together coordinate Zn(2+).

The protein belongs to the peptidase M3 family. Zn(2+) is required as a cofactor.

The protein localises to the mitochondrion matrix. The catalysed reaction is Release of an N-terminal octapeptide as second stage of processing of some proteins imported into the mitochondrion.. Functionally, cleaves proteins, imported into the mitochondrion, to their mature size. While most mitochondrial precursor proteins are processed to the mature form in one step by mitochondrial processing peptidase (MPP), the sequential cleavage by MIP of an octapeptide after initial processing by MPP is a required step for a subgroup of nuclear-encoded precursor proteins destined for the matrix or the inner membrane. In Coprinopsis scobicola (Ink cap fungus), this protein is Mitochondrial intermediate peptidase (OCT1).